We begin with the raw amino-acid sequence, 261 residues long: 1-(5-phosphoribosyl)-5-[(5-phosphoribosylamino)methylideneamino] imidazole-4-carboxamide isomerase (261 aa).

Catalysis depends on D8, which acts as the Proton acceptor. D139 (proton donor) is an active-site residue.

The protein belongs to the HisA/HisF family.

It localises to the cytoplasm. The catalysed reaction is 1-(5-phospho-beta-D-ribosyl)-5-[(5-phospho-beta-D-ribosylamino)methylideneamino]imidazole-4-carboxamide = 5-[(5-phospho-1-deoxy-D-ribulos-1-ylimino)methylamino]-1-(5-phospho-beta-D-ribosyl)imidazole-4-carboxamide. It participates in amino-acid biosynthesis; L-histidine biosynthesis; L-histidine from 5-phospho-alpha-D-ribose 1-diphosphate: step 4/9. This is 1-(5-phosphoribosyl)-5-[(5-phosphoribosylamino)methylideneamino] imidazole-4-carboxamide isomerase from Janthinobacterium sp. (strain Marseille) (Minibacterium massiliensis).